Consider the following 340-residue polypeptide: Lipoate--protein ligase 2 (340 aa).

The region spanning 31-222 is the BPL/LPL catalytic domain; the sequence is FLDEDILFPY…QILGIDDIKE (192 aa). ATP is bound by residues Arg73, 78-81, Lys136, and Ala140; that span reads GAVY. Lys136 provides a ligand contact to (R)-lipoate. The stretch at 293–321 forms a coiled coil; it reads QGDIKDVEEALQGTKMTREDLMHQLKQLD.

It belongs to the LplA family.

The catalysed reaction is L-lysyl-[lipoyl-carrier protein] + (R)-lipoate + ATP = N(6)-[(R)-lipoyl]-L-lysyl-[lipoyl-carrier protein] + AMP + diphosphate + H(+). Its pathway is protein modification; protein lipoylation via exogenous pathway; protein N(6)-(lipoyl)lysine from lipoate: step 1/2. It participates in protein modification; protein lipoylation via exogenous pathway; protein N(6)-(lipoyl)lysine from lipoate: step 2/2. Catalyzes specifically the lipoylation of GcvH-L (SAV0324), likely via the ATP-dependent activation of lipoate to lipoyl-AMP and the transfer of the activated lipoyl onto the lipoyl domain of the target protein. Can also utilize lipoamide as substrate for GcvH-L modification. The protein is Lipoate--protein ligase 2 of Staphylococcus aureus (strain Mu50 / ATCC 700699).